The primary structure comprises 159 residues: Transcription elongation factor GreA (159 aa).

The stretch at 46 to 73 forms a coiled coil; that stretch reads AEYHAAKEEQSFVEGRIKEIELKLSRMQ.

It belongs to the GreA/GreB family.

Its function is as follows. Necessary for efficient RNA polymerase transcription elongation past template-encoded arresting sites. The arresting sites in DNA have the property of trapping a certain fraction of elongating RNA polymerases that pass through, resulting in locked ternary complexes. Cleavage of the nascent transcript by cleavage factors such as GreA or GreB allows the resumption of elongation from the new 3'terminus. GreA releases sequences of 2 to 3 nucleotides. The sequence is that of Transcription elongation factor GreA from Vesicomyosocius okutanii subsp. Calyptogena okutanii (strain HA).